Consider the following 528-residue polypeptide: Ankyrin repeat and death domain-containing protein 1B (528 aa).

ANK repeat units follow at residues 67 to 96 (PNERSFQNAAKSNNLDLMEKLFEKKVNINV), 100 to 129 (MNRTALHFAVGRNHLSAVDFLLKHKARVDV), 133 to 162 (HGLTVIHLAAWSGSLEVMLMLVKAGADQRA), 166 to 197 (DGMSALHFATQSNHVRIVEYLIQDLHLKDLNQ), 201 to 230 (KGRKPFLLAAERGHVEMIEKLTFLNLHTSE), 234 to 263 (GGNTALHLAAKHGHSPAVQVLLAQWQDINE), 267 to 296 (LNISSLQIATRNGHASLVNFLLSENVDLHQ), 300 to 329 (PKESPLHLVVINNHITVVNSLLSAQHDIDI), 333 to 362 (KQQTPLHVAADRGNVELVETLLKAGCDLKA), and 366 to 395 (QGKTALAVASRSNHSLVVGMLIKAERYYAW). A Death domain is found at 427–515 (TLLWDLAYHQ…KLAEKTRHFK (89 aa)).

The polypeptide is Ankyrin repeat and death domain-containing protein 1B (ANKDD1B) (Homo sapiens (Human)).